We begin with the raw amino-acid sequence, 78 residues long: Large ribosomal subunit protein bL28 (78 aa).

Belongs to the bacterial ribosomal protein bL28 family.

This chain is Large ribosomal subunit protein bL28, found in Synechococcus sp. (strain CC9311).